The following is a 76-amino-acid chain: Large ribosomal subunit protein bL31 (76 aa).

It belongs to the bacterial ribosomal protein bL31 family. Type A subfamily. In terms of assembly, part of the 50S ribosomal subunit.

Its function is as follows. Binds the 23S rRNA. The chain is Large ribosomal subunit protein bL31 from Beijerinckia indica subsp. indica (strain ATCC 9039 / DSM 1715 / NCIMB 8712).